The following is a 284-amino-acid chain: Neutral protease 2 homolog AFLA_119780 (284 aa).

Intrachain disulfides connect C113-C185 and C192-C210. H235 lines the Zn(2+) pocket. Residue E236 is part of the active site. H239 and D250 together coordinate Zn(2+).

Belongs to the peptidase M35 family. It depends on Zn(2+) as a cofactor.

It is found in the secreted. It carries out the reaction Preferential cleavage of bonds with hydrophobic residues in P1'. Also 3-Asn-|-Gln-4 and 8-Gly-|-Ser-9 bonds in insulin B chain.. Functionally, secreted metalloproteinase that allows assimilation of proteinaceous substrates. Shows high activities on basic nuclear substrates such as histone and protamine. This Aspergillus flavus (strain ATCC 200026 / FGSC A1120 / IAM 13836 / NRRL 3357 / JCM 12722 / SRRC 167) protein is Neutral protease 2 homolog AFLA_119780.